Consider the following 289-residue polypeptide: Syntaxin-3 (289 aa).

Residues 1-263 (MKDRLEQLKA…VKYQSQARKK (263 aa)) lie on the Cytoplasmic side of the membrane. Residues 32 to 111 (MDEFFSEIEE…IEEDEVRSSA (80 aa)) adopt a coiled-coil conformation. The 63-residue stretch at 191–253 (LSEIEGRHKD…EKARDETKKA (63 aa)) folds into the t-SNARE coiled-coil homology domain. The helical; Anchor for type IV membrane protein transmembrane segment at 264-284 (LIIIIVLVVVLLGILALIIGL) threads the bilayer. Over 285-289 (SVGLN) the chain is Extracellular.

This sequence belongs to the syntaxin family. Interacts with REEP6. Interacts with PRPH2 in rod and cone photoreceptors. Interacts with ROM1. Interacts with SNAP25. Interacts with VAMP2. In terms of assembly, interacts with IPO5. As to expression, expressed in small intestine, kidney, pancreas, placenta as well as in retina. Weaker expression in lung, liver and heart. Not expressed in brain and skeletal muscle. Expressed only in the retina. In terms of tissue distribution, ubiquitously expressed.

The protein resides in the apical cell membrane. The protein localises to the nucleus. In terms of biological role, potentially involved in docking of synaptic vesicles at presynaptic active zones. Apical receptor involved in membrane fusion of apical vesicles. Its function is as follows. Essential for survival of retinal photoreceetors. Functionally, functions as a regulator of gene expression. The polypeptide is Syntaxin-3 (STX3) (Homo sapiens (Human)).